Here is a 113-residue protein sequence, read N- to C-terminus: Nucleoid-associated protein SYNW0027 (113 aa).

Belongs to the YbaB/EbfC family. As to quaternary structure, homodimer.

Its subcellular location is the cytoplasm. The protein resides in the nucleoid. Functionally, binds to DNA and alters its conformation. May be involved in regulation of gene expression, nucleoid organization and DNA protection. The sequence is that of Nucleoid-associated protein SYNW0027 from Parasynechococcus marenigrum (strain WH8102).